We begin with the raw amino-acid sequence, 394 residues long: Candidapepsin (394 aa).

The signal sequence occupies residues M1–G23. The propeptide at L24–R60 is activation peptide. The N-linked (GlcNAc...) asparagine glycan is linked to N50. A Peptidase A1 domain is found at Y74 to A381. Residue D92 is part of the active site. C107 and C119 are joined by a disulfide. D278 is a catalytic residue. The cysteines at positions 314 and 347 are disulfide-linked.

Belongs to the peptidase A1 family. O-glycosylated.

It is found in the secreted. The enzyme catalyses Preferential cleavage at the carboxyl of hydrophobic amino acids, but fails to cleave 15-Leu-|-Tyr-16, 16-Tyr-|-Leu-17 and 24-Phe-|-Phe-25 of insulin B chain. Activates trypsinogen, and degrades keratin.. The polypeptide is Candidapepsin (SAPT1) (Candida tropicalis (Yeast)).